The primary structure comprises 577 residues: Protein hinderin (577 aa).

Ser21 carries the phosphoserine modification. Residues 91–167 (LKDLCLEDKR…CQELLSLYQK (77 aa)) are a coiled coil. Position 179 is a phosphoserine (Ser179). Residues 251–282 (TLHHPKDDLDKIPSETTTCNCESPGRKPAVPT) are disordered. Over residues 254 to 263 (HPKDDLDKIP) the composition is skewed to basic and acidic residues. Residues 358 to 402 (LKKQISEDRKQQLMLQKMELEIEKERLQHLLAQQETKLLLKQQQL) are a coiled coil. 3 disordered regions span residues 425–444 (SSSI…RKER), 449–492 (FHSH…GSLK), and 520–540 (LSPN…GAWN). Positions 449–468 (FHSHMKDDAQWSCQKKDTCR) are enriched in basic and acidic residues. 2 positions are modified to phosphoserine: Ser490 and Ser521.

As to quaternary structure, interacts (via N- and C-terminal domains) with SMC3 (via central hinge region). In terms of tissue distribution, widely expressed.

Its function is as follows. Competes with SMC1 for binding to SMC3. May affect the availability of SMC3 to engage in the formation of multimeric protein complexes. In Homo sapiens (Human), this protein is Protein hinderin (KIAA1328).